We begin with the raw amino-acid sequence, 81 residues long: Cytotoxin 4a (81 aa).

Positions 1–21 are cleaved as a signal peptide; sequence MKTLLLTLVVVTIVCLDLGYT. 4 cysteine pairs are disulfide-bonded: C24/C42, C35/C59, C63/C74, and C75/C80.

Belongs to the three-finger toxin family. Short-chain subfamily. Type IA cytotoxin sub-subfamily. In terms of assembly, monomer in solution; Homodimer and oligomer in the presence of negatively charged lipids forming a pore with a size ranging between 20 and 30 Angstroms. Expressed by the venom gland.

Its subcellular location is the secreted. The protein localises to the target cell membrane. Functionally, shows cytolytic activity on many different cells by forming pore in lipid membranes. In vivo, increases heart rate or kills the animal by cardiac arrest. In addition, it binds to heparin with high affinity, interacts with Kv channel-interacting protein 1 (KCNIP1) in a calcium-independent manner, and binds to integrin alpha-V/beta-3 (ITGAV/ITGB3) with moderate affinity. In Naja sputatrix (Malayan spitting cobra), this protein is Cytotoxin 4a.